The chain runs to 338 residues: Lipoate-protein ligase A (338 aa).

Positions 29-216 (PATQRVLFLW…AFFAHYGERV (188 aa)) constitute a BPL/LPL catalytic domain. ATP contacts are provided by residues Arg71, 76-79 (GAVF), and Lys134. Residue Lys134 participates in (R)-lipoate binding.

Belongs to the LplA family. In terms of assembly, monomer.

Its subcellular location is the cytoplasm. The enzyme catalyses L-lysyl-[lipoyl-carrier protein] + (R)-lipoate + ATP = N(6)-[(R)-lipoyl]-L-lysyl-[lipoyl-carrier protein] + AMP + diphosphate + H(+). Its pathway is protein modification; protein lipoylation via exogenous pathway; protein N(6)-(lipoyl)lysine from lipoate: step 1/2. It participates in protein modification; protein lipoylation via exogenous pathway; protein N(6)-(lipoyl)lysine from lipoate: step 2/2. Functionally, catalyzes both the ATP-dependent activation of exogenously supplied lipoate to lipoyl-AMP and the transfer of the activated lipoyl onto the lipoyl domains of lipoate-dependent enzymes. The protein is Lipoate-protein ligase A of Salmonella agona (strain SL483).